Consider the following 161-residue polypeptide: Peripheral myelin protein 22 (161 aa).

A topological domain (cytoplasmic) is located at residue methionine 1. A helical membrane pass occupies residues 2-31; that stretch reads LLLLLGILFLHIAVLVLLFVSTIVSQWLVG. Residues 32 to 64 are Extracellular-facing; sequence NGHTTDLWQNCTTSALGAVQHCYSSSVSEWLQS. Residue asparagine 41 is glycosylated (N-linked (GlcNAc...) asparagine). Residues 65–91 form a helical membrane-spanning segment; that stretch reads VQATMILSVIFSVLALFLFFCQLFTLT. Topologically, residues 92–95 are cytoplasmic; it reads KGGR. The helical transmembrane segment at 96–119 threads the bilayer; that stretch reads FYITGFFQILAGLCVMSAAAIYTV. Residues 120–133 lie on the Extracellular side of the membrane; it reads RHSEWHVNTDYSYG. The chain crosses the membrane as a helical span at residues 134 to 156; that stretch reads FAYILAWVAFPLALLSGIIYVIL. At 157-160 the chain is on the cytoplasmic side; the sequence is RKRE.

This sequence belongs to the PMP-22/EMP/MP20 family. Ubiquitinated by the DCX(DCAF13) E3 ubiquitin ligase complex, leading to its degradation. Schwann cells of the peripheral nervous system. Expressed at growth arrest of mammalian fibroblasts.

Its subcellular location is the cell membrane. Functionally, might be involved in growth regulation, and in myelinization in the peripheral nervous system. The chain is Peripheral myelin protein 22 (Pmp22) from Mus musculus (Mouse).